The following is a 119-amino-acid chain: Ribonuclease P protein component (119 aa).

It belongs to the RnpA family. Consists of a catalytic RNA component (M1 or rnpB) and a protein subunit.

The enzyme catalyses Endonucleolytic cleavage of RNA, removing 5'-extranucleotides from tRNA precursor.. RNaseP catalyzes the removal of the 5'-leader sequence from pre-tRNA to produce the mature 5'-terminus. It can also cleave other RNA substrates such as 4.5S RNA. The protein component plays an auxiliary but essential role in vivo by binding to the 5'-leader sequence and broadening the substrate specificity of the ribozyme. This is Ribonuclease P protein component from Sodalis glossinidius (strain morsitans).